The following is a 342-amino-acid chain: DNA repair protein RAD51 homolog 1 (342 aa).

Residues 1–24 (MTTMEQRRNQNAVQQQDDEETQHG) form a disordered region. One can recognise a HhH domain in the interval 51–80 (TVEGVAYTPRKDLLQIKGISDAKVDKIVEA). The 215-residue stretch at 100–314 (QEIIQITSGS…LRKGRAEERI (215 aa)) folds into the FtsK domain. An ATP-binding site is contributed by 130-137 (GEFRSGKT).

This sequence belongs to the RecA family. RAD51 subfamily. In terms of assembly, self-associates and interacts with XRCC3. Binds to RAD54/CHR25. Interacts with BRCA2A and BRCA2B. Can form a tripartite complex with both BRCA2B and DSS1(I). In terms of tissue distribution, detected in various tissues. Higher expression in reproductive tissues than in vegetative tissues, with the highest expression level in young flower buds. At cellular level, is expressed at low levels in flower primordia, then at higher levels in young anthers and at highest levels in both females and males meiocytes. Not detected in gametophytes.

Its subcellular location is the nucleus. Binds to single and double-stranded DNA and exhibits DNA-dependent ATPase activity. Unwinds duplex DNA. Component of the meiotic recombination pathway. Seems to play a role in mediating chromosome homology search, chromosome pairing and synapsis at early stages and probably chromosome crossing-over at later stages in meiosis. Probably is involved in the repair of meiotic double strand breaks (DBSs) generated by AtSPO11-1 and in homologous recombination. Its function is dispensable for vegetative growth and root mitosis. This chain is DNA repair protein RAD51 homolog 1, found in Arabidopsis thaliana (Mouse-ear cress).